The chain runs to 220 residues: Casparian strip membrane protein 4 (220 aa).

Residues 1-39 (MDSRREVEESSTAPILESKRTRSNGKGKSIDGDHSPPHA) are disordered. Over 1-60 (MDSRREVEESSTAPILESKRTRSNGKGKSIDGDHSPPHAATVVTTKATPLQKGGMKKGIA) the chain is Cytoplasmic. A helical transmembrane segment spans residues 61–81 (ILDFILRLGAIGAALGAAVIM). Residues 82-108 (GTNEQILPFFTQFLQFHAQWDDFPMFK) lie on the Extracellular side of the membrane. The helical transmembrane segment at 109 to 129 (FFVVANGAAAGFLILSLPFSI) threads the bilayer. The Cytoplasmic segment spans residues 130 to 141 (VCIVRPLAAGPR). Residues 142-162 (FLLVIVDLVLMALVVAAASSA) form a helical membrane-spanning segment. The Extracellular portion of the chain corresponds to 163–194 (AAVVYLAHNGSQDANWNAICQQFTDFCQGSSL). Asn-171 carries N-linked (GlcNAc...) asparagine glycosylation. The helical transmembrane segment at 195 to 215 (AVVASFVASVFLACLVVVSSV) threads the bilayer. Residues 216–220 (ALKRT) are Cytoplasmic-facing.

Belongs to the Casparian strip membrane proteins (CASP) family. In terms of assembly, homodimer and heterodimers.

It is found in the cell membrane. Its function is as follows. Regulates membrane-cell wall junctions and localized cell wall deposition. Required for establishment of the Casparian strip membrane domain (CSD) and the subsequent formation of Casparian strips, a cell wall modification of the root endodermis that determines an apoplastic barrier between the intraorganismal apoplasm and the extraorganismal apoplasm and prevents lateral diffusion. This is Casparian strip membrane protein 4 from Medicago truncatula (Barrel medic).